The sequence spans 464 residues: MKNAAELWHNVLSVIEEEQRTPKASYDMWLKSTEGVTLNGTTLIVSAPAAFTVTWLERQYLSLLEDTVEEVTGSRLDIQFIEEGQAKHMLDRQNEEVEVMEVAPAKTKAQKTPKSSDELVMSELGQLNEKYTFDTFVIGSGNRFAHAASLAVAEAPAKAYNPLFIYGGVGLGKTHLMHAIGQYVQDQKLGTKIAYVSSEQFTNDFINSIRDNKTVQFRNKYRNIDVLLIDDIQFLAGKEQTQEEFFHTFNALHNDQKQIIISSDRPPKEIPTLEDRLRSRFEWGLITDITPPDLETRIAILRKKANAEQLDVSNEVMLYIASQIDTNIRELEGALTRVIAYANLVGRTIDPNVAAEALHNIMPASEPRKVTIRDIQESVSKHFNLPFDDLKAKKRTKSIAFPRQIAMYLSREMTESSLPKIGEEFGGRDHTTVIHAHEKISTLVKSDGETGKVIEQIKHELKHS.

Residues 1–82 form a domain I, interacts with DnaA modulators region; that stretch reads MKNAAELWHN…GSRLDIQFIE (82 aa). The tract at residues 82 to 125 is domain II; it reads EEGQAKHMLDRQNEEVEVMEVAPAKTKAQKTPKSSDELVMSELG. The interval 126–342 is domain III, AAA+ region; the sequence is QLNEKYTFDT…GALTRVIAYA (217 aa). Positions 170, 172, 173, and 174 each coordinate ATP. The domain IV, binds dsDNA stretch occupies residues 343-464; it reads NLVGRTIDPN…EQIKHELKHS (122 aa).

The protein belongs to the DnaA family. As to quaternary structure, oligomerizes as a right-handed, spiral filament on DNA at oriC.

The protein localises to the cytoplasm. In terms of biological role, plays an essential role in the initiation and regulation of chromosomal replication. ATP-DnaA binds to the origin of replication (oriC) to initiate formation of the DNA replication initiation complex once per cell cycle. Binds the DnaA box (a 9 base pair repeat at the origin) and separates the double-stranded (ds)DNA. Forms a right-handed helical filament on oriC DNA; dsDNA binds to the exterior of the filament while single-stranded (ss)DNA is stabiized in the filament's interior. The ATP-DnaA-oriC complex binds and stabilizes one strand of the AT-rich DNA unwinding element (DUE), permitting loading of DNA polymerase. After initiation quickly degrades to an ADP-DnaA complex that is not apt for DNA replication. Binds acidic phospholipids. This chain is Chromosomal replication initiator protein DnaA, found in Exiguobacterium sibiricum (strain DSM 17290 / CCUG 55495 / CIP 109462 / JCM 13490 / 255-15).